The primary structure comprises 624 residues: 1-deoxy-D-xylulose-5-phosphate synthase (624 aa).

Thiamine diphosphate-binding positions include histidine 80 and 121-123; that span reads GHS. A Mg(2+)-binding site is contributed by aspartate 152. Thiamine diphosphate contacts are provided by residues 153-154, asparagine 181, tyrosine 288, and glutamate 370; that span reads GA. Asparagine 181 contributes to the Mg(2+) binding site.

Belongs to the transketolase family. DXPS subfamily. Homodimer. The cofactor is Mg(2+). Thiamine diphosphate serves as cofactor.

The enzyme catalyses D-glyceraldehyde 3-phosphate + pyruvate + H(+) = 1-deoxy-D-xylulose 5-phosphate + CO2. The protein operates within metabolic intermediate biosynthesis; 1-deoxy-D-xylulose 5-phosphate biosynthesis; 1-deoxy-D-xylulose 5-phosphate from D-glyceraldehyde 3-phosphate and pyruvate: step 1/1. Functionally, catalyzes the acyloin condensation reaction between C atoms 2 and 3 of pyruvate and glyceraldehyde 3-phosphate to yield 1-deoxy-D-xylulose-5-phosphate (DXP). The sequence is that of 1-deoxy-D-xylulose-5-phosphate synthase from Proteus mirabilis (strain HI4320).